An 88-amino-acid polypeptide reads, in one-letter code: MALLDFFLSRKKSTANIAKERLQIIVAERRRSDAEPHYLPQLRKDILEVICKYVQIDPEMVTVQLEQKDGDISILELNVTLPEAEESR.

Belongs to the MinE family.

Prevents the cell division inhibition by proteins MinC and MinD at internal division sites while permitting inhibition at polar sites. This ensures cell division at the proper site by restricting the formation of a division septum at the midpoint of the long axis of the cell. This is Cell division topological specificity factor from Citrobacter koseri (strain ATCC BAA-895 / CDC 4225-83 / SGSC4696).